A 178-amino-acid chain; its full sequence is Epididymal-specific lipocalin-9 (178 aa).

A signal peptide spans 1-16; sequence MVLLLVLGLVLSLATA. N-linked (GlcNAc...) asparagine glycosylation is found at N46, N68, and N129. The cysteines at positions 83 and 176 are disulfide-linked.

The protein belongs to the calycin superfamily. Lipocalin family. Expressed in epididymis. Not detected in all other tissues tested.

The protein resides in the secreted. The sequence is that of Epididymal-specific lipocalin-9 (Lcn9) from Mus musculus (Mouse).